The primary structure comprises 186 residues: Peptidyl-tRNA hydrolase (186 aa).

Tyrosine 16 is a binding site for tRNA. The active-site Proton acceptor is histidine 21. Positions 66, 68, and 114 each coordinate tRNA.

Belongs to the PTH family. As to quaternary structure, monomer.

Its subcellular location is the cytoplasm. It carries out the reaction an N-acyl-L-alpha-aminoacyl-tRNA + H2O = an N-acyl-L-amino acid + a tRNA + H(+). Hydrolyzes ribosome-free peptidyl-tRNAs (with 1 or more amino acids incorporated), which drop off the ribosome during protein synthesis, or as a result of ribosome stalling. Its function is as follows. Catalyzes the release of premature peptidyl moieties from peptidyl-tRNA molecules trapped in stalled 50S ribosomal subunits, and thus maintains levels of free tRNAs and 50S ribosomes. The chain is Peptidyl-tRNA hydrolase from Ureaplasma parvum serovar 3 (strain ATCC 700970).